The following is a 396-amino-acid chain: Ribosomal RNA large subunit methyltransferase I (396 aa).

The PUA domain maps to 2–79 (AIRIKLKPGR…REEEIDREFF (78 aa)).

The protein belongs to the methyltransferase superfamily. RlmI family.

Its subcellular location is the cytoplasm. It carries out the reaction cytidine(1962) in 23S rRNA + S-adenosyl-L-methionine = 5-methylcytidine(1962) in 23S rRNA + S-adenosyl-L-homocysteine + H(+). In terms of biological role, specifically methylates the cytosine at position 1962 (m5C1962) of 23S rRNA. This Shewanella oneidensis (strain ATCC 700550 / JCM 31522 / CIP 106686 / LMG 19005 / NCIMB 14063 / MR-1) protein is Ribosomal RNA large subunit methyltransferase I.